We begin with the raw amino-acid sequence, 327 residues long: DNA-directed RNA polymerase subunit alpha (327 aa).

An alpha N-terminal domain (alpha-NTD) region spans residues 1-233 (MVREKVKVST…NLFIPFLHVE (233 aa)). The segment at 267–327 (LAFQYIFIDQ…KKILDILEKK (61 aa)) is alpha C-terminal domain (alpha-CTD).

The protein belongs to the RNA polymerase alpha chain family. As to quaternary structure, in plastids the minimal PEP RNA polymerase catalytic core is composed of four subunits: alpha, beta, beta', and beta''. When a (nuclear-encoded) sigma factor is associated with the core the holoenzyme is formed, which can initiate transcription.

Its subcellular location is the plastid. It localises to the chloroplast. The catalysed reaction is RNA(n) + a ribonucleoside 5'-triphosphate = RNA(n+1) + diphosphate. DNA-dependent RNA polymerase catalyzes the transcription of DNA into RNA using the four ribonucleoside triphosphates as substrates. The protein is DNA-directed RNA polymerase subunit alpha of Lepidium virginicum (Virginia pepperweed).